The following is a 283-amino-acid chain: Polyamine aminopropyltransferase (283 aa).

Residues Asn-5–Lys-241 form the PABS domain. Gln-35 provides a ligand contact to S-methyl-5'-thioadenosine. Positions 66 and 90 each coordinate spermidine. S-methyl-5'-thioadenosine is bound by residues Asp-110 and Asp-141–Gly-142. Catalysis depends on Asp-160, which acts as the Proton acceptor. Asp-160–Asp-163 is a spermidine binding site. Residue Pro-167 participates in S-methyl-5'-thioadenosine binding.

It belongs to the spermidine/spermine synthase family. As to quaternary structure, homodimer or homotetramer.

The protein localises to the cytoplasm. The enzyme catalyses S-adenosyl 3-(methylsulfanyl)propylamine + putrescine = S-methyl-5'-thioadenosine + spermidine + H(+). The protein operates within amine and polyamine biosynthesis; spermidine biosynthesis; spermidine from putrescine: step 1/1. Its function is as follows. Catalyzes the irreversible transfer of a propylamine group from the amino donor S-adenosylmethioninamine (decarboxy-AdoMet) to putrescine (1,4-diaminobutane) to yield spermidine. The protein is Polyamine aminopropyltransferase of Stenotrophomonas maltophilia (strain R551-3).